The sequence spans 356 residues: MSRILVIGAGGVGVITALSLWLKKESDVSLVVRSDYDRVLKHGYTIESCDYGRLEGWRPHHIYSSVEDAASAADNQGYNYIVVTTKNIIDGPVNSRVSNIIRPVLEKNKELHGPQLTTHILLVQNGIDIEKEIWAEFPREQYRYTVLSGIQLIGSTKIGSGHISQVGQDHLSCGAFDPQDAAAIQAANDFVRMYSNEGQNFVEFDPRVRYSRWKKLLYNAAINTSTALVGLDVPRCLEFGVNKKSTEIEVFHPAMREIIAIAASEGIIIEEEFITMFTEITRKKVFKPSMCVDCEKGQLMELEVILGNPIRIAKRNGVATPTLSILYNLLVLVQAKLKERKGLLKFDEKTATLVDE.

The protein localises to the cytoplasm. Its subcellular location is the nucleus. This is an uncharacterized protein from Saccharomyces cerevisiae (strain ATCC 204508 / S288c) (Baker's yeast).